Here is a 72-residue protein sequence, read N- to C-terminus: Metallothionein-like protein 1B (72 aa).

This sequence belongs to the metallothionein superfamily. Type 15 family. As to expression, expressed in leaves of mature plants.

In terms of biological role, metallothioneins have a high content of cysteine residues that bind various heavy metals. Functions as a metal chelator of nickel (Ni), cadmium (Cd), zinc (Zn) and copper (Cu). Possesses higher affinity for Ni and Cd ions compared to Zn and Cu ions. The polypeptide is Metallothionein-like protein 1B (MT1B) (Oryza sativa subsp. japonica (Rice)).